Here is a 343-residue protein sequence, read N- to C-terminus: Cytoplasmic tRNA 2-thiolation protein 1 (343 aa).

It belongs to the TtcA family. CTU1/NCS6/ATPBD3 subfamily.

The protein resides in the cytoplasm. It functions in the pathway tRNA modification; 5-methoxycarbonylmethyl-2-thiouridine-tRNA biosynthesis. Functionally, plays a central role in 2-thiolation of mcm(5)S(2)U at tRNA wobble positions of tRNA(Lys), tRNA(Glu) and tRNA(Gln). Directly binds tRNAs and probably acts by catalyzing adenylation of tRNAs, an intermediate required for 2-thiolation. It is unclear whether it acts as a sulfurtransferase that transfers sulfur from thiocarboxylated URM1 onto the uridine of tRNAs at wobble position. The sequence is that of Cytoplasmic tRNA 2-thiolation protein 1 from Drosophila erecta (Fruit fly).